A 220-amino-acid polypeptide reads, in one-letter code: Large ribosomal subunit protein bL9 (220 aa).

Over residues 167–184 (AAAEVEQAEDVAAAEQQD) the composition is skewed to low complexity. Residues 167–220 (AAAEVEQAEDVAAAEQQDSSPVDDHADDADGATGGEGRDEGAGDASDGEEMPST) are disordered.

It belongs to the bacterial ribosomal protein bL9 family.

Its function is as follows. Binds to the 23S rRNA. This is Large ribosomal subunit protein bL9 from Anaplasma marginale (strain St. Maries).